Consider the following 236-residue polypeptide: EP300-interacting inhibitor of differentiation 2 (236 aa).

A compositionally biased stretch (polar residues) spans 1–15; it reads MSQLPAVSSAPQTGA. The tract at residues 1–102 is disordered; sequence MSQLPAVSSA…REGPAAAAAS (102 aa). 2 stretches are compositionally biased toward low complexity: residues 32 to 68 and 75 to 102; these read RALP…GRVA and AAAA…AAAS. 2 positions are modified to omega-N-methylarginine: R63 and R79. Positions 170 to 190 form a coiled coil; that stretch reads RIQELEERRRRFVEACRAREA.

As to quaternary structure, heterodimer with EID2B. Interacts with the C-terminus of EP300. Interacts with HDAC1 and HDAC2. Interacts with SMAD2, SMAD4 and with the MH2 domain of SMAD3. Expressed in heart, brain, kidney and pancreas. Not detected in placenta.

It is found in the nucleus. Functionally, interacts with EP300 and acts as a repressor of MYOD-dependent transcription and muscle differentiation. Inhibits EP300 histone acetyltransferase activity. Acts as a repressor of TGFB/SMAD transcriptional responses. May act as a repressor of the TGFB/SMAD3-dependent signaling by selectively blocking formation of TGFB-induced SMAD3-SMAD4 complex. The polypeptide is EP300-interacting inhibitor of differentiation 2 (Mus musculus (Mouse)).